Reading from the N-terminus, the 157-residue chain is MPKLSQDEIDDLKDVFELFDFWDGRDGAVDAFKLGDVCRCLGINPRNEDVFAVGGTHKMGEKSLPFEEFLPAYEGLMDCEQGTFADYMEAFKTFDREGQGFISGAELRHVLTALGERLSDEDVDEIIKLTDLQEDLEGNVKYEDFVKKVMAGPYPDK.

EF-hand domains follow at residues 7 to 44 and 82 to 117; these read DEID…LGIN and GTFA…LGER.

In molluscan muscle, calcium regulation is associated with myosin rather than with actin. Muscle myosin contains two types of light chains: the catalytic light chain, essential for ATPase activity, and the regulatory light chain, a calcium-binding protein responsible for Ca(2+) dependent binding and Ca(2+) dependent Mg-ATPase activity. The chain is Myosin essential light chain, striated adductor muscle from Argopecten irradians (Bay scallop).